The chain runs to 128 residues: Large ribosomal subunit protein uL22 (128 aa).

Belongs to the universal ribosomal protein uL22 family. Part of the 50S ribosomal subunit.

In terms of biological role, this protein binds specifically to 23S rRNA; its binding is stimulated by other ribosomal proteins, e.g. L4, L17, and L20. It is important during the early stages of 50S assembly. It makes multiple contacts with different domains of the 23S rRNA in the assembled 50S subunit and ribosome. The globular domain of the protein is located near the polypeptide exit tunnel on the outside of the subunit, while an extended beta-hairpin is found that lines the wall of the exit tunnel in the center of the 70S ribosome. The polypeptide is Large ribosomal subunit protein uL22 (Methylocella silvestris (strain DSM 15510 / CIP 108128 / LMG 27833 / NCIMB 13906 / BL2)).